The chain runs to 276 residues: Large ribosomal subunit protein uL2 (276 aa).

The segment covering 28 to 38 (RPEKSLTEKLS) has biased composition (basic and acidic residues). Disordered regions lie at residues 28–57 (RPEKSLTEKLSKKGGRNNQGRLTVRHQGGG) and 219–276 (TVRG…RRKK).

Belongs to the universal ribosomal protein uL2 family. As to quaternary structure, part of the 50S ribosomal subunit. Forms a bridge to the 30S subunit in the 70S ribosome.

In terms of biological role, one of the primary rRNA binding proteins. Required for association of the 30S and 50S subunits to form the 70S ribosome, for tRNA binding and peptide bond formation. It has been suggested to have peptidyltransferase activity; this is somewhat controversial. Makes several contacts with the 16S rRNA in the 70S ribosome. The polypeptide is Large ribosomal subunit protein uL2 (Exiguobacterium sp. (strain ATCC BAA-1283 / AT1b)).